Reading from the N-terminus, the 1135-residue chain is Potassium channel subfamily T member 2 (1135 aa).

The Cytoplasmic segment spans residues 1–63 (MVDLESEVPP…KNQRSSLRIR (63 aa)). Residues 64-84 (LFNFSLKLLSCLLYIIRVLLE) traverse the membrane as a helical segment. The Extracellular segment spans residues 85 to 101 (KPSQGSEWSHIFWVNRS). Residues 102–122 (LPLWGLQVSVALISLFETILL) form a helical membrane-spanning segment. Residues 123 to 137 (GYLSYKGNIWEQILR) are Cytoplasmic-facing. A helical membrane pass occupies residues 138-158 (IPFILEIINAVPFIISIFWPT). The Extracellular segment spans residues 159–164 (LRNLFV). The helical transmembrane segment at 165–185 (PVFLNCWLAKHALENMINDLH) threads the bilayer. Over 186 to 198 (RAIQRTQSAMFNQ) the chain is Cytoplasmic. A helical membrane pass occupies residues 199–219 (VLILISTLLCLIFTCICGIQH). Residues 220–228 (LERIGKKLN) are Extracellular-facing. Positions 229–249 (LFDSLYFCIVTFSTVGFGDVT) form an intramembrane region, pore-forming. Over 250–256 (PETWSSK) the chain is Extracellular. A helical transmembrane segment spans residues 257–277 (LFVVAMICVALVVLPIQFEQL). Topologically, residues 278-1135 (AYLWMERQKS…VQDSREETQL (858 aa)) are cytoplasmic. 2 RCK N-terminal domains span residues 299-435 (EKHV…DHVV) and 718-858 (NKLI…CYSL). Disordered stretches follow at residues 982–1036 (DTKD…AEKI) and 1111–1135 (PNSE…ETQL). Residues 1010–1030 (LRRKSMQWARRLSRKGPKHSG) are compositionally biased toward basic residues. Polar residues predominate over residues 1111-1122 (PNSEPSRKNSIC).

Belongs to the potassium channel family. Calcium-activated (TC 1.A.1.3) subfamily. KCa4.2/KCNT2 sub-subfamily. In terms of assembly, homotetramer. Forms heteromeric channels with KCNT1. These heterodimer channels differ from the homomers in their unitary conductance, kinetic behavior, subcellular localization, and response to activation of protein kinase C. Phosphorylated by protein kinase C. Phosphorylation of the C-terminal domain inhibits channel activity. As to expression, within the dorsal root ganglia (DRGs), exclusively expressed in small-sized and medium-sized calcitonin gene-related peptide (CGRP)-containing DRG neurons.

The protein localises to the cell membrane. It catalyses the reaction K(+)(in) = K(+)(out). Are normally in a closed state unless activated by an increase in intracellular Na(+) and Cl(-). Inhibited upon stimulation of G-protein coupled receptors, such as CHRM1 and GRM1. There is conflicting data about the effect of ATP on KNCT2 channels activity. Intracellular ATP was initially report to inhibit the channel activity. However, others studies conclude that KNCT2 channels are not inhibited by intracellular ATP. Functionally, sodium-activated and chloride-activated potassium channel. Produces rapidly activating outward rectifier K(+) currents. Contributes to regulate neuronal excitability. The polypeptide is Potassium channel subfamily T member 2 (Kcnt2) (Mus musculus (Mouse)).